The chain runs to 89 residues: Small ribosomal subunit protein uS15 (89 aa).

The protein belongs to the universal ribosomal protein uS15 family. Part of the 30S ribosomal subunit. Forms a bridge to the 50S subunit in the 70S ribosome, contacting the 23S rRNA.

In terms of biological role, one of the primary rRNA binding proteins, it binds directly to 16S rRNA where it helps nucleate assembly of the platform of the 30S subunit by binding and bridging several RNA helices of the 16S rRNA. Its function is as follows. Forms an intersubunit bridge (bridge B4) with the 23S rRNA of the 50S subunit in the ribosome. The sequence is that of Small ribosomal subunit protein uS15 from Paraburkholderia phymatum (strain DSM 17167 / CIP 108236 / LMG 21445 / STM815) (Burkholderia phymatum).